A 179-amino-acid polypeptide reads, in one-letter code: Shikimate kinase (179 aa).

Residue 11-16 (GAGKTT) participates in ATP binding. Thr15 contributes to the Mg(2+) binding site. Residues Asp33, Arg57, and Gly79 each contribute to the substrate site. Arg118 serves as a coordination point for ATP. Substrate is bound at residue Arg140.

This sequence belongs to the shikimate kinase family. As to quaternary structure, monomer. The cofactor is Mg(2+).

It localises to the cytoplasm. The catalysed reaction is shikimate + ATP = 3-phosphoshikimate + ADP + H(+). Its pathway is metabolic intermediate biosynthesis; chorismate biosynthesis; chorismate from D-erythrose 4-phosphate and phosphoenolpyruvate: step 5/7. Functionally, catalyzes the specific phosphorylation of the 3-hydroxyl group of shikimic acid using ATP as a cosubstrate. The sequence is that of Shikimate kinase from Bacteroides fragilis (strain ATCC 25285 / DSM 2151 / CCUG 4856 / JCM 11019 / LMG 10263 / NCTC 9343 / Onslow / VPI 2553 / EN-2).